A 269-amino-acid polypeptide reads, in one-letter code: MSIRTNAFIEIANRIHKNAYDYSGIVIDDETSCIDIKCKSCDNTFNVRIVNHLKKRVGCRRCNMVKTKEKKRMTTQEFIKLAQEIHGDEYDYSKTTFVRSDIPMEIICRKCGNSVFHTRHRHLVERCGCFCQRSAKKNSTEKFIEKSKLKHGPDTFDYSKTIYVNTSTKIIVQCKSCGFEMLQRYDVHLKSKGCTYCNKNTKPTTEQWINRARKFHGDKYDYSQVTYVNSRQKITIICLEHGPFETIPSNFFTTKESCSGCRHDKKLED.

This is an uncharacterized protein from Acanthamoeba polyphaga mimivirus (APMV).